Here is a 302-residue protein sequence, read N- to C-terminus: Oxygen-dependent coproporphyrinogen-III oxidase (302 aa).

Position 94 (S94) interacts with substrate. A divalent metal cation is bound by residues H98 and H108. H108 serves as the catalytic Proton donor. 110 to 112 (NVR) lines the substrate pocket. A divalent metal cation is bound by residues H147 and H177. The interval 242–277 (YVEFNLVFDRGTLFGLQSGGRTESILMSMPPVANWR) is important for dimerization. Substrate is bound at residue 260–262 (GGR).

Belongs to the aerobic coproporphyrinogen-III oxidase family. As to quaternary structure, homodimer. The cofactor is a divalent metal cation.

The protein resides in the cytoplasm. It carries out the reaction coproporphyrinogen III + O2 + 2 H(+) = protoporphyrinogen IX + 2 CO2 + 2 H2O. The protein operates within porphyrin-containing compound metabolism; protoporphyrin-IX biosynthesis; protoporphyrinogen-IX from coproporphyrinogen-III (O2 route): step 1/1. Functionally, involved in the heme biosynthesis. Catalyzes the aerobic oxidative decarboxylation of propionate groups of rings A and B of coproporphyrinogen-III to yield the vinyl groups in protoporphyrinogen-IX. The sequence is that of Oxygen-dependent coproporphyrinogen-III oxidase from Ralstonia nicotianae (strain ATCC BAA-1114 / GMI1000) (Ralstonia solanacearum).